Here is a 354-residue protein sequence, read N- to C-terminus: MKKIIMTGGGTAGHVTPNLALVPELKKLGYEIKYIGSIEGIERKIIEKEGIEYFPISSGKLRRYFDLKNFSDPFKVLKGVFQAKKIIKREKPDIVFSKGGFVTVPVVIAAHLNKIPVIAHESDITPGLANKLATPYCTRVCVTFPESVKHIKGDKAVLTGTPIRRELLEGNKLEGIKLCGFKDNKPILLIIGGSLGSKIINEIVRKNLDNILSKFNIIHICGKSNLDENLENRKGYAQFEYVNEELPDLMKASDLVISRAGANVIYELLALKKPNLLIPLSKKSSRGDQILNAASFEKSGYSLVLKEEELEDKNLMKKLNYLYENRNVYINNMSKSKMDNGVKNITELIKKYTK.

UDP-N-acetyl-alpha-D-glucosamine-binding positions include 11-13 (TAG), Arg164, Ser194, and Gln289.

This sequence belongs to the glycosyltransferase 28 family. MurG subfamily.

The protein localises to the cell membrane. The enzyme catalyses di-trans,octa-cis-undecaprenyl diphospho-N-acetyl-alpha-D-muramoyl-L-alanyl-D-glutamyl-meso-2,6-diaminopimeloyl-D-alanyl-D-alanine + UDP-N-acetyl-alpha-D-glucosamine = di-trans,octa-cis-undecaprenyl diphospho-[N-acetyl-alpha-D-glucosaminyl-(1-&gt;4)]-N-acetyl-alpha-D-muramoyl-L-alanyl-D-glutamyl-meso-2,6-diaminopimeloyl-D-alanyl-D-alanine + UDP + H(+). Its pathway is cell wall biogenesis; peptidoglycan biosynthesis. In terms of biological role, cell wall formation. Catalyzes the transfer of a GlcNAc subunit on undecaprenyl-pyrophosphoryl-MurNAc-pentapeptide (lipid intermediate I) to form undecaprenyl-pyrophosphoryl-MurNAc-(pentapeptide)GlcNAc (lipid intermediate II). The chain is UDP-N-acetylglucosamine--N-acetylmuramyl-(pentapeptide) pyrophosphoryl-undecaprenol N-acetylglucosamine transferase from Clostridium botulinum (strain Kyoto / Type A2).